The following is a 208-amino-acid chain: MARYLGSKCRLCRREATKLFLKGEKCYSDKCAMERRNYVPGQHGQRRRKVSDYGVHLREKQKVKRSYGLLEAQFRTLYKKAERMKGVTGENLLQLLERRLDNVVYRLGLAASRTEARQIISHKTLLVNGKMVNVPSYLCKPGDVVAVREKSRGQLRIKGALASAMQRGLPSWVEVDAEKLVGTFRSIPERSDLPAEFNENLIVELYSK.

The S4 RNA-binding domain maps to 98 to 158 (RRLDNVVYRL…EKSRGQLRIK (61 aa)).

The protein belongs to the universal ribosomal protein uS4 family. Part of the 30S ribosomal subunit. Contacts protein S5. The interaction surface between S4 and S5 is involved in control of translational fidelity.

Its function is as follows. One of the primary rRNA binding proteins, it binds directly to 16S rRNA where it nucleates assembly of the body of the 30S subunit. With S5 and S12 plays an important role in translational accuracy. The sequence is that of Small ribosomal subunit protein uS4 from Magnetococcus marinus (strain ATCC BAA-1437 / JCM 17883 / MC-1).